The chain runs to 222 residues: Gamma-glutamyl cyclotransferase gliK (222 aa).

2 consecutive transmembrane segments (helical) span residues 154 to 174 and 187 to 207; these read GWWF…AAII and GHVP…MWAQ.

Belongs to the class-I pyridoxal-phosphate-dependent aminotransferase family.

It localises to the membrane. It carries out the reaction an alpha-(gamma-L-glutamyl)-L-amino acid = 5-oxo-L-proline + an L-alpha-amino acid. The protein operates within secondary metabolite biosynthesis. Functionally, gamma-glutamyl cyclotransferase; part of the gene cluster that mediates the biosynthesis of an unusual class of epipolythiodioxopiperazines (ETPs) lacking the reactive thiol group important for toxicity. Firstly, L-tyrosine is prenylated by tcpD, before undergoing condensation with L-glycine in a reaction catalyzed by the NRPS tcpP leading to the diketopiperazine (DKP) backbone. Afterwards the alpha-carbon of tyrosine is oxidized by the cytochrome P450 tcpC to form a hydroxyl group. However, in contrast other ETP biosynthesis pathways studied so far, tcpC is not able to bishydroxylate the DKP at both alpha-carbon positions, but hydroxylates the alpha-carbon of the tyrosine part and the nitrogen of the glycine part. The next steps involve an alpha,beta-elimination reaction catalyzed by tcpI, a methylation by the methyltransferase tcpN the action of the four enzyme cascade tcpG/K/J/I. Due to a dysfunctional cytochrome P450 monooxygenase tcpC, the pathway leads to the biosynthesis of probable non-toxic metabolites lacking the reactive thiol group. This chain is Gamma-glutamyl cyclotransferase gliK, found in Claviceps purpurea (strain 20.1) (Ergot fungus).